The primary structure comprises 360 residues: 3-dehydroquinate synthase (360 aa).

Residues 69 to 74, 103 to 107, 127 to 128, Lys-140, Lys-149, and 167 to 170 contribute to the NAD(+) site; these read DGEKYK, GVVGD, TT, and TLDT. Residues Glu-182, His-246, and His-263 each contribute to the Zn(2+) site.

It belongs to the sugar phosphate cyclases superfamily. Dehydroquinate synthase family. The cofactor is Co(2+). Zn(2+) is required as a cofactor. Requires NAD(+) as cofactor.

It localises to the cytoplasm. It catalyses the reaction 7-phospho-2-dehydro-3-deoxy-D-arabino-heptonate = 3-dehydroquinate + phosphate. It functions in the pathway metabolic intermediate biosynthesis; chorismate biosynthesis; chorismate from D-erythrose 4-phosphate and phosphoenolpyruvate: step 2/7. Its function is as follows. Catalyzes the conversion of 3-deoxy-D-arabino-heptulosonate 7-phosphate (DAHP) to dehydroquinate (DHQ). The polypeptide is 3-dehydroquinate synthase (Vesicomyosocius okutanii subsp. Calyptogena okutanii (strain HA)).